The primary structure comprises 200 residues: NADH-quinone oxidoreductase subunit C (200 aa).

Belongs to the complex I 30 kDa subunit family. As to quaternary structure, NDH-1 is composed of 14 different subunits. Subunits NuoB, C, D, E, F, and G constitute the peripheral sector of the complex.

It localises to the cell inner membrane. The enzyme catalyses a quinone + NADH + 5 H(+)(in) = a quinol + NAD(+) + 4 H(+)(out). NDH-1 shuttles electrons from NADH, via FMN and iron-sulfur (Fe-S) centers, to quinones in the respiratory chain. The immediate electron acceptor for the enzyme in this species is believed to be ubiquinone. Couples the redox reaction to proton translocation (for every two electrons transferred, four hydrogen ions are translocated across the cytoplasmic membrane), and thus conserves the redox energy in a proton gradient. This chain is NADH-quinone oxidoreductase subunit C, found in Burkholderia cenocepacia (strain HI2424).